We begin with the raw amino-acid sequence, 55 residues long: Large ribosomal subunit protein bL33 (55 aa).

This sequence belongs to the bacterial ribosomal protein bL33 family.

In Erythrobacter litoralis (strain HTCC2594), this protein is Large ribosomal subunit protein bL33.